Reading from the N-terminus, the 583-residue chain is RuBisCO large subunit-binding protein subunit alpha, chloroplastic (583 aa).

Positions 1–14 (MATANALSSPSVLC) are enriched in polar residues. The segment at 1–35 (MATANALSSPSVLCSSRQGKLSGGSQQKGQRVSYR) is disordered. The transit peptide at 1–45 (MATANALSSPSVLCSSRQGKLSGGSQQKGQRVSYRKANRRFSLRA) directs the protein to the chloroplast. Residues 15–31 (SSRQGKLSGGSQQKGQR) are compositionally biased toward low complexity. Residue Ser89 is modified to Phosphoserine.

This sequence belongs to the chaperonin (HSP60) family. Oligomer of probably six alpha and six beta subunits.

It is found in the plastid. The protein resides in the chloroplast. This protein binds RuBisCO small and large subunits and is implicated in the assembly of the enzyme oligomer. The polypeptide is RuBisCO large subunit-binding protein subunit alpha, chloroplastic (Brassica napus (Rape)).